The following is a 213-amino-acid chain: 3-isopropylmalate dehydratase small subunit (213 aa).

Belongs to the LeuD family. LeuD type 1 subfamily. Heterodimer of LeuC and LeuD.

It catalyses the reaction (2R,3S)-3-isopropylmalate = (2S)-2-isopropylmalate. It participates in amino-acid biosynthesis; L-leucine biosynthesis; L-leucine from 3-methyl-2-oxobutanoate: step 2/4. Functionally, catalyzes the isomerization between 2-isopropylmalate and 3-isopropylmalate, via the formation of 2-isopropylmaleate. The protein is 3-isopropylmalate dehydratase small subunit of Neisseria gonorrhoeae (strain ATCC 700825 / FA 1090).